We begin with the raw amino-acid sequence, 482 residues long: Cobyric acid synthase (482 aa).

The GATase cobBQ-type domain maps to A243–F430. The active-site Nucleophile is the C325. The active site involves H422.

This sequence belongs to the CobB/CobQ family. CobQ subfamily.

Its pathway is cofactor biosynthesis; adenosylcobalamin biosynthesis. Functionally, catalyzes amidations at positions B, D, E, and G on adenosylcobyrinic A,C-diamide. NH(2) groups are provided by glutamine, and one molecule of ATP is hydrogenolyzed for each amidation. This is Cobyric acid synthase from Ruegeria sp. (strain TM1040) (Silicibacter sp.).